Reading from the N-terminus, the 255-residue chain is Putative OPA3-like protein CG13603 (255 aa).

A coiled-coil region spans residues 108 to 154 (KENKKNELAQSEKMELTNMLTEMNFRLERQDAQIREMTRVLADLDSR). The tract at residues 168-187 (VPFDPDTPDQSASARNPKKF) is disordered. A coiled-coil region spans residues 212–241 (DGRNRKAKEALQHLDEVAVQLEQSLGEAAT).

Belongs to the OPA3 family.

This chain is Putative OPA3-like protein CG13603, found in Drosophila melanogaster (Fruit fly).